The primary structure comprises 250 residues: Transcriptional activator protein EchR (250 aa).

Positions Lys173–Asn238 constitute an HTH luxR-type domain. Residues Tyr197–Gly216 constitute a DNA-binding region (H-T-H motif).

Belongs to the autoinducer-regulated transcriptional regulatory protein family.

In terms of biological role, functions as a potential ohlL-responsive transcriptional regulator. The sequence is that of Transcriptional activator protein EchR (echR) from Dickeya chrysanthemi (Pectobacterium chrysanthemi).